The sequence spans 253 residues: Ubiquinone/menaquinone biosynthesis C-methyltransferase UbiE (253 aa).

S-adenosyl-L-methionine is bound by residues T76, D97, and 125–126 (NA).

This sequence belongs to the class I-like SAM-binding methyltransferase superfamily. MenG/UbiE family.

It carries out the reaction a 2-demethylmenaquinol + S-adenosyl-L-methionine = a menaquinol + S-adenosyl-L-homocysteine + H(+). It catalyses the reaction a 2-methoxy-6-(all-trans-polyprenyl)benzene-1,4-diol + S-adenosyl-L-methionine = a 5-methoxy-2-methyl-3-(all-trans-polyprenyl)benzene-1,4-diol + S-adenosyl-L-homocysteine + H(+). It participates in quinol/quinone metabolism; menaquinone biosynthesis; menaquinol from 1,4-dihydroxy-2-naphthoate: step 2/2. Its pathway is cofactor biosynthesis; ubiquinone biosynthesis. Methyltransferase required for the conversion of demethylmenaquinol (DMKH2) to menaquinol (MKH2) and the conversion of 2-polyprenyl-6-methoxy-1,4-benzoquinol (DDMQH2) to 2-polyprenyl-3-methyl-6-methoxy-1,4-benzoquinol (DMQH2). This is Ubiquinone/menaquinone biosynthesis C-methyltransferase UbiE from Stenotrophomonas maltophilia (strain R551-3).